We begin with the raw amino-acid sequence, 87 residues long: MDALNSREQQEFQRVVEQKQMKDFMRLYSNLVERCFSDCVNDFTSSKLTSKEQTCIMRCSEKFLKHSERVGQRFQEQNAALNQSMGR.

Positions 35-59 match the Twin CX3C motif motif; it reads CFSDCVNDFTSSKLTSKEQTCIMRC. Disulfide bonds link cysteine 35–cysteine 59 and cysteine 39–cysteine 55.

The protein belongs to the small Tim family. Heterohexamer; composed of 3 copies of TIM9 and 3 copies of TIM10, named soluble 70 kDa complex. Associates with the TIM22 complex, whose core is composed of TIM22 and TIM54. Interacts with the transmembrane regions of multi-pass transmembrane proteins in transit.

It is found in the mitochondrion inner membrane. Its function is as follows. Mitochondrial intermembrane chaperone that participates in the import and insertion of multi-pass transmembrane proteins into the mitochondrial inner membrane. Also required for the transfer of beta-barrel precursors from the TOM complex to the sorting and assembly machinery (SAM complex) of the outer membrane. Acts as a chaperone-like protein that protects the hydrophobic precursors from aggregation and guide them through the mitochondrial intermembrane space. The chain is Mitochondrial import inner membrane translocase subunit TIM9 (TIM9) from Eremothecium gossypii (strain ATCC 10895 / CBS 109.51 / FGSC 9923 / NRRL Y-1056) (Yeast).